The following is a 309-amino-acid chain: uncharacterized protein (309 aa).

One can recognise a Radical SAM core domain in the interval 17–254 (RYGQKVHKLT…AGEMIRHTPP (238 aa)). [4Fe-4S] cluster is bound by residues Cys33, Cys45, and Cys48.

It belongs to the radical SAM superfamily. The cofactor is [4Fe-4S] cluster.

This is an uncharacterized protein from Escherichia coli O157:H7.